The chain runs to 166 residues: Large ribosomal subunit protein uL10 (166 aa).

It belongs to the universal ribosomal protein uL10 family. Part of the ribosomal stalk of the 50S ribosomal subunit. The N-terminus interacts with L11 and the large rRNA to form the base of the stalk. The C-terminus forms an elongated spine to which L12 dimers bind in a sequential fashion forming a multimeric L10(L12)X complex.

Functionally, forms part of the ribosomal stalk, playing a central role in the interaction of the ribosome with GTP-bound translation factors. The chain is Large ribosomal subunit protein uL10 from Lactobacillus johnsonii (strain CNCM I-12250 / La1 / NCC 533).